Reading from the N-terminus, the 20-residue chain is Succinate--CoA ligase [ADP-forming] subunit beta, mitochondrial (20 aa).

An ATP-grasp domain is found at 8 to 20 (SMELLQEAGVSIP).

It belongs to the succinate/malate CoA ligase beta subunit family. ATP-specific subunit beta subfamily. As to quaternary structure, heterodimer of an alpha and a beta subunit. The beta subunit determines specificity for ATP. Interacts with ALAS2.

It localises to the mitochondrion. It carries out the reaction succinate + ATP + CoA = succinyl-CoA + ADP + phosphate. It participates in carbohydrate metabolism; tricarboxylic acid cycle; succinate from succinyl-CoA (ligase route): step 1/1. ATP-specific succinyl-CoA synthetase functions in the citric acid cycle (TCA), coupling the hydrolysis of succinyl-CoA to the synthesis of ATP and thus represents the only step of substrate-level phosphorylation in the TCA. The beta subunit provides nucleotide specificity of the enzyme and binds the substrate succinate, while the binding sites for coenzyme A and phosphate are found in the alpha subunit. The chain is Succinate--CoA ligase [ADP-forming] subunit beta, mitochondrial from Canis lupus familiaris (Dog).